Here is a 248-residue protein sequence, read N- to C-terminus: Ubiquinone biosynthesis O-methyltransferase (248 aa).

Arginine 41, glycine 72, aspartate 93, and methionine 136 together coordinate S-adenosyl-L-methionine.

Belongs to the methyltransferase superfamily. UbiG/COQ3 family.

The catalysed reaction is a 3-demethylubiquinol + S-adenosyl-L-methionine = a ubiquinol + S-adenosyl-L-homocysteine + H(+). The enzyme catalyses a 3-(all-trans-polyprenyl)benzene-1,2-diol + S-adenosyl-L-methionine = a 2-methoxy-6-(all-trans-polyprenyl)phenol + S-adenosyl-L-homocysteine + H(+). It participates in cofactor biosynthesis; ubiquinone biosynthesis. Functionally, O-methyltransferase that catalyzes the 2 O-methylation steps in the ubiquinone biosynthetic pathway. The chain is Ubiquinone biosynthesis O-methyltransferase from Rhizobium etli (strain CIAT 652).